The primary structure comprises 778 residues: Endonuclease MutS2 (778 aa).

328-335 (GPNTGGKT) is a binding site for ATP. Positions 702-777 (LDLRGKRYEE…GSGATIVTFK (76 aa)) constitute a Smr domain.

Belongs to the DNA mismatch repair MutS family. MutS2 subfamily. As to quaternary structure, homodimer. Binds to stalled ribosomes, contacting rRNA.

Endonuclease that is involved in the suppression of homologous recombination and thus may have a key role in the control of bacterial genetic diversity. Its function is as follows. Acts as a ribosome collision sensor, splitting the ribosome into its 2 subunits. Detects stalled/collided 70S ribosomes which it binds and splits by an ATP-hydrolysis driven conformational change. Acts upstream of the ribosome quality control system (RQC), a ribosome-associated complex that mediates the extraction of incompletely synthesized nascent chains from stalled ribosomes and their subsequent degradation. Probably generates substrates for RQC. The sequence is that of Endonuclease MutS2 from Streptococcus pneumoniae (strain CGSP14).